The chain runs to 303 residues: Coenzyme PQQ synthesis protein B (303 aa).

This sequence belongs to the PqqB family.

The protein operates within cofactor biosynthesis; pyrroloquinoline quinone biosynthesis. In terms of biological role, may be involved in the transport of PQQ or its precursor to the periplasm. This is Coenzyme PQQ synthesis protein B from Pseudomonas entomophila (strain L48).